A 400-amino-acid polypeptide reads, in one-letter code: 3-phenylpropionate/cinnamic acid dioxygenase ferredoxin--NAD(+) reductase component (400 aa).

5 to 36 (TIIIVGGGQAAAMAAASLRQQGFTGELHLFSD) contacts FAD. An NAD(+)-binding site is contributed by 146–174 (SVVIVGAGTIGLELAASATQRGCKATVIE).

The protein belongs to the bacterial ring-hydroxylating dioxygenase ferredoxin reductase family. As to quaternary structure, this dioxygenase system consists of four proteins: the two subunits of the hydroxylase component (HcaE and HcaF), a ferredoxin (HcaC) and a ferredoxin reductase (HcaD). FAD is required as a cofactor.

It carries out the reaction 2 reduced [2Fe-2S]-[ferredoxin] + NAD(+) + H(+) = 2 oxidized [2Fe-2S]-[ferredoxin] + NADH. It functions in the pathway aromatic compound metabolism; 3-phenylpropanoate degradation. In terms of biological role, part of the multicomponent 3-phenylpropionate dioxygenase, that converts 3-phenylpropionic acid (PP) and cinnamic acid (CI) into 3-phenylpropionate-dihydrodiol (PP-dihydrodiol) and cinnamic acid-dihydrodiol (CI-dihydrodiol), respectively. This is 3-phenylpropionate/cinnamic acid dioxygenase ferredoxin--NAD(+) reductase component from Escherichia coli O7:K1 (strain IAI39 / ExPEC).